The following is a 278-amino-acid chain: Large ribosomal subunit protein uL2 (278 aa).

Positions 201–278 are disordered; that stretch reads HGNINDGKAG…IMRSRHQRKK (78 aa). Positions 210–221 are enriched in basic residues; it reads GRSRWRGKRPHV.

The protein belongs to the universal ribosomal protein uL2 family. Part of the 50S ribosomal subunit. Forms a bridge to the 30S subunit in the 70S ribosome.

Its function is as follows. One of the primary rRNA binding proteins. Required for association of the 30S and 50S subunits to form the 70S ribosome, for tRNA binding and peptide bond formation. It has been suggested to have peptidyltransferase activity; this is somewhat controversial. Makes several contacts with the 16S rRNA in the 70S ribosome. In Sinorhizobium fredii (strain NBRC 101917 / NGR234), this protein is Large ribosomal subunit protein uL2.